A 464-amino-acid polypeptide reads, in one-letter code: Glutamate--tRNA ligase 2 (464 aa).

The short motif at proline 11 to serine 21 is the 'HIGH' region element. Positions lysine 240–arginine 244 match the 'KMSKS' region motif. An ATP-binding site is contributed by lysine 243.

Belongs to the class-I aminoacyl-tRNA synthetase family. Glutamate--tRNA ligase type 1 subfamily. In terms of assembly, monomer.

The protein localises to the cytoplasm. It catalyses the reaction tRNA(Glu) + L-glutamate + ATP = L-glutamyl-tRNA(Glu) + AMP + diphosphate. Functionally, catalyzes the attachment of glutamate to tRNA(Glu) in a two-step reaction: glutamate is first activated by ATP to form Glu-AMP and then transferred to the acceptor end of tRNA(Glu). The protein is Glutamate--tRNA ligase 2 of Rickettsia bellii (strain OSU 85-389).